The chain runs to 540 residues: Phosphoenolpyruvate carboxykinase (ATP) (540 aa).

Arg65 serves as a coordination point for substrate. Lys87 is modified (N6-acetyllysine). Substrate-binding residues include Tyr207 and Lys213. Residues Lys213, His232, and 248–256 (GLSGTGKTT) each bind ATP. Positions 213 and 232 each coordinate Mn(2+). Asp269 is a Mn(2+) binding site. ATP is bound by residues Glu297, Arg333, 449-450 (RI), and Thr455. Arg333 is a binding site for substrate. An N6-acetyllysine modification is found at Lys523.

This sequence belongs to the phosphoenolpyruvate carboxykinase (ATP) family. As to quaternary structure, monomer. Requires Mn(2+) as cofactor.

The protein localises to the cytoplasm. The enzyme catalyses oxaloacetate + ATP = phosphoenolpyruvate + ADP + CO2. It participates in carbohydrate biosynthesis; gluconeogenesis. Involved in the gluconeogenesis. Catalyzes the conversion of oxaloacetate (OAA) to phosphoenolpyruvate (PEP) through direct phosphoryl transfer between the nucleoside triphosphate and OAA. The polypeptide is Phosphoenolpyruvate carboxykinase (ATP) (Escherichia coli O6:H1 (strain CFT073 / ATCC 700928 / UPEC)).